The following is a 437-amino-acid chain: ATP-dependent protease ATPase subunit HslU (437 aa).

ATP-binding positions include valine 18, 60 to 65 (GCGKTE), aspartate 250, glutamate 315, and arginine 387.

The protein belongs to the ClpX chaperone family. HslU subfamily. As to quaternary structure, a double ring-shaped homohexamer of HslV is capped on each side by a ring-shaped HslU homohexamer. The assembly of the HslU/HslV complex is dependent on binding of ATP.

The protein resides in the cytoplasm. Its function is as follows. ATPase subunit of a proteasome-like degradation complex; this subunit has chaperone activity. The binding of ATP and its subsequent hydrolysis by HslU are essential for unfolding of protein substrates subsequently hydrolyzed by HslV. HslU recognizes the N-terminal part of its protein substrates and unfolds these before they are guided to HslV for hydrolysis. This chain is ATP-dependent protease ATPase subunit HslU, found in Methylobacterium radiotolerans (strain ATCC 27329 / DSM 1819 / JCM 2831 / NBRC 15690 / NCIMB 10815 / 0-1).